Reading from the N-terminus, the 344-residue chain is DNA-directed RNA polymerase subunit alpha (344 aa).

Residues Met-1–Asp-239 are alpha N-terminal domain (alpha-NTD). The interval Val-254–Asp-344 is alpha C-terminal domain (alpha-CTD).

The protein belongs to the RNA polymerase alpha chain family. As to quaternary structure, homodimer. The RNAP catalytic core consists of 2 alpha, 1 beta, 1 beta' and 1 omega subunit. When a sigma factor is associated with the core the holoenzyme is formed, which can initiate transcription.

It carries out the reaction RNA(n) + a ribonucleoside 5'-triphosphate = RNA(n+1) + diphosphate. Its function is as follows. DNA-dependent RNA polymerase catalyzes the transcription of DNA into RNA using the four ribonucleoside triphosphates as substrates. The chain is DNA-directed RNA polymerase subunit alpha from Anaplasma phagocytophilum (strain HZ).